The following is a 250-amino-acid chain: DNA repair protein RecO (250 aa).

Belongs to the RecO family.

In terms of biological role, involved in DNA repair and RecF pathway recombination. This chain is DNA repair protein RecO, found in Granulibacter bethesdensis (strain ATCC BAA-1260 / CGDNIH1).